Here is a 141-residue protein sequence, read N- to C-terminus: Large ribosomal subunit protein uL11 (141 aa).

This sequence belongs to the universal ribosomal protein uL11 family. As to quaternary structure, part of the ribosomal stalk of the 50S ribosomal subunit. Interacts with L10 and the large rRNA to form the base of the stalk. L10 forms an elongated spine to which L12 dimers bind in a sequential fashion forming a multimeric L10(L12)X complex. In terms of processing, one or more lysine residues are methylated.

Its function is as follows. Forms part of the ribosomal stalk which helps the ribosome interact with GTP-bound translation factors. This is Large ribosomal subunit protein uL11 from Synechococcus sp. (strain CC9311).